Consider the following 115-residue polypeptide: T cell receptor delta variable 1 (115 aa).

Residues 1 to 21 (MLFSSLLCVFVAFSYSGSSVA) form the signal peptide. Residues 22–115 (QKVTQAQSSV…SAKYFCALGE (94 aa)) form the Ig-like domain. A disulfide bridge links Cys43 with Cys111.

In terms of assembly, gamma-delta TR is a heterodimer composed of a gamma and delta chain; disulfide-linked. The gamma-delta TR is associated with the transmembrane signaling CD3 coreceptor proteins following the stoichiometry: a single gamma-delta TR heterodimer associates with one CD3D-CD3E heterodimer, one CD3G-CD3E heterodimer and one CD247 homodimer forming a stable octameric structure. Upon activation, gamma-delta TR complex associates with FCER1G to initiate intracellular signaling.

Its subcellular location is the cell membrane. Its function is as follows. V region of the variable domain of T cell receptor (TR) delta chain that participates in the antigen recognition. Gamma-delta TRs recognize a variety of self and foreign non-peptide antigens frequently expressed at the epithelial boundaries between the host and external environment, including endogenous lipids presented by MH-like protein CD1D and phosphoantigens presented by butyrophilin-like molecule BTN3A1. Upon antigen recognition induces rapid, innate-like immune responses involved in pathogen clearance and tissue repair. Binding of gamma-delta TR complex to antigen triggers phosphorylation of immunoreceptor tyrosine-based activation motifs (ITAMs) in the CD3 chains by the LCK and FYN kinases, allowing the recruitment, phosphorylation, and activation of ZAP70 that facilitates phosphorylation of the scaffolding proteins LCP2 and LAT. This lead to the formation of a supramolecular signalosome that recruits the phospholipase PLCG1, resulting in calcium mobilization and ERK activation, ultimately leading to T cell expansion and differentiation into effector cells. Gamma-delta TRs are produced through somatic rearrangement of a limited repertoire of variable (V), diversity (D), and joining (J) genes. The potential diversity of gamma-delta TRs is conferred by the unique ability to rearrange (D) genes in tandem and to utilize all three reading frames. The combinatorial diversity is considerably increased by the sequence exonuclease trimming and random nucleotide (N) region additions which occur during the V-(D)-J rearrangements. The sequence is that of T cell receptor delta variable 1 from Homo sapiens (Human).